We begin with the raw amino-acid sequence, 185 residues long: Large ribosomal subunit protein uL5 (185 aa).

It belongs to the universal ribosomal protein uL5 family. In terms of assembly, part of the 50S ribosomal subunit; part of the 5S rRNA/L5/L18/L25 subcomplex. Contacts the 5S rRNA and the P site tRNA. Forms a bridge to the 30S subunit in the 70S ribosome.

In terms of biological role, this is one of the proteins that bind and probably mediate the attachment of the 5S RNA into the large ribosomal subunit, where it forms part of the central protuberance. In the 70S ribosome it contacts protein S13 of the 30S subunit (bridge B1b), connecting the 2 subunits; this bridge is implicated in subunit movement. Contacts the P site tRNA; the 5S rRNA and some of its associated proteins might help stabilize positioning of ribosome-bound tRNAs. This Bartonella bacilliformis (strain ATCC 35685 / KC583 / Herrer 020/F12,63) protein is Large ribosomal subunit protein uL5.